The sequence spans 365 residues: Histidinol-phosphate aminotransferase (365 aa).

Positions 1–23 are disordered; sequence MSRPVPNPGILDIAPYTPGKSPV. N6-(pyridoxal phosphate)lysine is present on lysine 221.

It belongs to the class-II pyridoxal-phosphate-dependent aminotransferase family. Histidinol-phosphate aminotransferase subfamily. In terms of assembly, homodimer. Pyridoxal 5'-phosphate serves as cofactor.

It catalyses the reaction L-histidinol phosphate + 2-oxoglutarate = 3-(imidazol-4-yl)-2-oxopropyl phosphate + L-glutamate. It participates in amino-acid biosynthesis; L-histidine biosynthesis; L-histidine from 5-phospho-alpha-D-ribose 1-diphosphate: step 7/9. This Rhodopseudomonas palustris (strain BisB18) protein is Histidinol-phosphate aminotransferase.